A 727-amino-acid polypeptide reads, in one-letter code: Procollagen-lysine,2-oxoglutarate 5-dioxygenase 1 (727 aa).

The first 18 residues, 1-18 (MRPLLLLALLGWLLLAEA), serve as a signal peptide directing secretion. Asn-163, Asn-197, and Asn-538 each carry an N-linked (GlcNAc...) asparagine glycan. In terms of domain architecture, Fe2OG dioxygenase spans 636–727 (QFDLAFVVRY…RYIAVSFVDP (92 aa)). Residues His-656 and Asp-658 each coordinate Fe cation. N-linked (GlcNAc...) asparagine glycosylation occurs at Asn-686. Residue His-708 participates in Fe cation binding. Arg-718 is an active-site residue.

In terms of assembly, homodimer. Identified in a complex with P3H3 and P3H4. Requires Fe(2+) as cofactor. It depends on L-ascorbate as a cofactor.

It is found in the rough endoplasmic reticulum membrane. The catalysed reaction is L-lysyl-[collagen] + 2-oxoglutarate + O2 = (5R)-5-hydroxy-L-lysyl-[collagen] + succinate + CO2. Part of a complex composed of PLOD1, P3H3 and P3H4 that catalyzes hydroxylation of lysine residues in collagen alpha chains and is required for normal assembly and cross-linkling of collagen fibrils. Forms hydroxylysine residues in -Xaa-Lys-Gly- sequences in collagens. These hydroxylysines serve as sites of attachment for carbohydrate units and are essential for the stability of the intermolecular collagen cross-links. The sequence is that of Procollagen-lysine,2-oxoglutarate 5-dioxygenase 1 (PLOD1) from Homo sapiens (Human).